The chain runs to 1555 residues: Bromodomain adjacent to zinc finger domain protein 1A (1555 aa).

The required for association with the CHRAC1/POLE3 complex stretch occupies residues 1–128 (MPLLHRKPFV…EETVEVIRNN (128 aa)). The interval 1–128 (MPLLHRKPFV…EETVEVIRNN (128 aa)) is required for interaction with the CHRAC1-POLE3 heterodimer. Required for interaction with the CHRAC1-POLE3 heterodimer. Residues 1–133 (MPLLHRKPFV…VIRNNGTRLQ (133 aa)) form a required for interaction with NCOR1 region. Positions 22-128 (EEVFYCKVTN…EETVEVIRNN (107 aa)) constitute a WAC domain. Phosphoserine is present on residues Ser-270 and Ser-284. One can recognise a DDT domain in the interval 422–488 (PEVFGDALMV…LTAIFQAMAE (67 aa)). A coiled-coil region spans residues 635 to 701 (IEDYVDVLRQ…EDEQRNSAAV (67 aa)). Composition is skewed to basic and acidic residues over residues 652–664 (LKAE…REAT) and 671–696 (RKEE…DEQR). The segment at 652-751 (LKAEQHRKER…KRSRRGKVGQ (100 aa)) is disordered. The interval 668–935 (IRRRKEEKLK…QEKSRICAQL (268 aa)) is interaction with SMARCA5. Residues 668-935 (IRRRKEEKLK…QEKSRICAQL (268 aa)) are required for interaction with SMARCA5 and formation of the CHRAC ISWI chromatin remodeling complex. Acidic residues-rich tracts occupy residues 705 to 714 (GEEEREDFDT) and 728 to 737 (PDVVTEDEDD). Thr-732 is subject to Phosphothreonine. Residues 773–798 (SADAEEALRQEQQQKEKELLDKIQSA) are a coiled coil. Disordered regions lie at residues 843 to 874 (PSSF…SSLD) and 944 to 969 (HFSD…CDIS). Residues 864 to 873 (SFLSESTSSL) are compositionally biased toward low complexity. A Glycyl lysine isopeptide (Lys-Gly) (interchain with G-Cter in SUMO2) cross-link involves residue Lys-954. Ser-962 and Ser-963 each carry phosphoserine. The PHD-type zinc finger occupies 1149-1199 (NARCKICRKKGDAENMVLCDGCDRGHHTYCVRPKLKAVPDGDWFCPECRPK). The interval 1203-1429 (RRLSSRQRPS…LNRRSSGRQG (227 aa)) is disordered. Residues 1214–1258 (ESDEEMEEGMEDDDDEVDDDDEEGQSEEEEYEVEQDEEDSDDDEA) are compositionally biased toward acidic residues. Positions 1263–1277 (KRGRPQVRLPIKTKG) are enriched in basic residues. Ser-1282 bears the Phosphoserine mark. The span at 1297 to 1313 (SRSQQSTPKNTAKSASK) shows a compositional bias: polar residues. Phosphoserine is present on residues Ser-1320, Ser-1339, Ser-1352, Ser-1370, Ser-1401, Ser-1412, and Ser-1416. A compositionally biased stretch (polar residues) spans 1369 to 1386 (HSPSFTNFRVSTSRSSRQ). Residues 1429-1532 (GGVHELSAFE…AFFHIQAQKL (104 aa)) enclose the Bromo domain. Residue Thr-1546 is modified to Phosphothreonine.

It belongs to the WAL family. In terms of assembly, component of the ACF-1 ISWI chromatin remodeling complex at least composed of SMARCA1 and BAZ1A, which regulates the spacing of histone octamers on the DNA template to facilitate access to DNA. Within the ACF-1 ISWI chromatin remodeling complex interacts with SMARCA1; the interaction is direct. Component of the ACF-5 ISWI chromatin remodeling complex (also called the ACF complex) at least composed of BAZ1A and SMARCA5/SNF2H, which regulates the spacing of histone octamers on the DNA template to facilitate access to DNA. Within the ACF-5 ISWI chromatin remodeling complex interacts with SMARCA5/SNF2H; the interaction is direct. Component of the CHRAC ISWI chromatin remodeling complex at least composed of SMARCA5/SNF2H, BAZ1A/ACF1, CHRAC1 and POLE3; the complex preferentially binds DNA through the CHRAC1-POLE3 heterodimer and possesses ATP-dependent nucleosome-remodeling activity. Within the complex interacts (via N-terminus) with POLE3-CHRAC1 heterodimer; the interaction is direct and is required for the complex to preferentially bind to DNA. Within the complex interacts with SMARCA5/SNF2H; the interaction is direct and promotes the interaction with the POLE3-CHRAC1 heterodimer. Interacts with NCOR1 (via its RD1 domain); the interaction corepresses a number of NCOR1-regulated genes.

The protein localises to the nucleus. Its function is as follows. Regulatory subunit of the ATP-dependent ACF-1 and ACF-5 ISWI chromatin remodeling complexes, which form ordered nucleosome arrays on chromatin and slide edge- and center-positioned histone octamers away from their original location on the DNA template to facilitate access to DNA during DNA-templated processes such as DNA replication, transcription, and repair. Both complexes regulate the spacing of nucleosomes along the chromatin and have the ability to slide mononucleosomes to the center of a DNA template in an ATP-dependent manner. The ACF-1 ISWI chromatin remodeling complex has a lower ATP hydrolysis rate than the ACF-5 ISWI chromatin remodeling complex. Has a role in sensing the length of DNA which flank nucleosomes, which modulates the nucleosome spacing activity of the ACF-5 ISWI chromatin remodeling complex. Involved in DNA replication and together with SMARCA5/SNF2H is required for replication of pericentric heterochromatin in S-phase. May have a role in nuclear receptor-mediated transcription repression. The sequence is that of Bromodomain adjacent to zinc finger domain protein 1A (Baz1a) from Mus musculus (Mouse).